We begin with the raw amino-acid sequence, 88 residues long: Small ribosomal subunit protein bS16c (88 aa).

Belongs to the bacterial ribosomal protein bS16 family.

Its subcellular location is the plastid. The protein resides in the chloroplast. This chain is Small ribosomal subunit protein bS16c, found in Gossypium hirsutum (Upland cotton).